The following is a 421-amino-acid chain: Phosphoglycerate kinase, cytosolic (421 aa).

(2R)-3-phosphoglycerate-binding residues include V23, D24, F25, N26, R39, S61, H62, G64, R65, R135, H172, and R173. Residues G218 and A219 each coordinate ADP. G218 contributes to the CDP binding site. AMP contacts are provided by A219 and K220. A219 serves as a coordination point for ATP. A219 contributes to the Mg(2+) binding site. A (2R)-3-phosphoglycerate-binding site is contributed by K220. D223 contributes to the CDP binding site. D223 is a binding site for Mg(2+). ADP-binding residues include K224 and G242. Residue K224 coordinates AMP. ATP is bound at residue K224. G242 is a binding site for CDP. Positions 243 and 315 each coordinate AMP. Positions 243 and 315 each coordinate ATP. ADP contacts are provided by A315 and N339. The CDP site is built by G340 and F345. 4 residues coordinate ADP: F345, E346, D378, and S379. Residue E346 participates in AMP binding. ATP-binding residues include E346, D378, and S379. D378 contacts Mg(2+).

It belongs to the phosphoglycerate kinase family. In terms of assembly, monomer. It depends on Mg(2+) as a cofactor.

It localises to the cytoplasm. It catalyses the reaction (2R)-3-phosphoglycerate + ATP = (2R)-3-phospho-glyceroyl phosphate + ADP. It participates in carbohydrate degradation; glycolysis; pyruvate from D-glyceraldehyde 3-phosphate: step 2/5. In Trypanosoma brucei brucei, this protein is Phosphoglycerate kinase, cytosolic.